Consider the following 466-residue polypeptide: ATP synthase subunit beta, sodium ion specific (466 aa).

Position 153–160 (153–160 (GGAGVGKT)) interacts with ATP.

It belongs to the ATPase alpha/beta chains family. As to quaternary structure, F-type ATPases have 2 components, CF(1) - the catalytic core - and CF(0) - the membrane proton channel. CF(1) has five subunits: alpha(3), beta(3), gamma(1), delta(1), epsilon(1). CF(0) has three main subunits: a, b and c.

It is found in the cell membrane. The catalysed reaction is 4 Na(+)(in) + ATP + H2O = 4 Na(+)(out) + ADP + phosphate + H(+). With respect to regulation, inhibited by nitrate. In terms of biological role, produces ATP from ADP in the presence of a sodium ion gradient across the membrane. The beta chain is the catalytic subunit. The sequence is that of ATP synthase subunit beta, sodium ion specific from Acetobacterium woodii (strain ATCC 29683 / DSM 1030 / JCM 2381 / KCTC 1655 / WB1).